We begin with the raw amino-acid sequence, 500 residues long: L-arabinose isomerase (500 aa).

Residues E306, E331, H348, and H447 each contribute to the Mn(2+) site.

Belongs to the arabinose isomerase family. Mn(2+) is required as a cofactor.

The enzyme catalyses beta-L-arabinopyranose = L-ribulose. It participates in carbohydrate degradation; L-arabinose degradation via L-ribulose; D-xylulose 5-phosphate from L-arabinose (bacterial route): step 1/3. In terms of biological role, catalyzes the conversion of L-arabinose to L-ribulose. This is L-arabinose isomerase from Anoxybacillus flavithermus (strain DSM 21510 / WK1).